The following is a 612-amino-acid chain: Chloride intracellular channel protein 6 (612 aa).

Residues 1-373 (MAEATEPKEV…NGPASEEGDL (373 aa)) form a disordered region. Basic and acidic residues predominate over residues 34-51 (LEGREASEGAAEAPRDLG). S40 carries the post-translational modification Phosphoserine. A compositionally biased stretch (low complexity) spans 84-96 (PGTETPGTSGAPG). Residues 120-129 (QQVQGTSSGL) are compositionally biased toward polar residues. Basic and acidic residues predominate over residues 140-153 (EDARREPEDPKASE). Low complexity predominate over residues 208–223 (SSPQPQDEAIEIAAAE). 2 stretches are compositionally biased toward basic and acidic residues: residues 240-264 (AKGE…RVDS) and 275-303 (EEAR…RPES). S264, S303, and S321 each carry phosphoserine. 2 stretches are compositionally biased toward basic and acidic residues: residues 325-335 (EEAKSTGHEES) and 354-364 (ELGRVNGRREN). S368 is modified (phosphoserine). Positions 395–398 (CPFS) match the G-site motif. Residues 397-417 (FSQRLFMILWLKGVIFNVTTV) traverse the membrane as a helical segment. The 172-residue stretch at 441–612 (DGEVKTDVNK…AYSDAAKRMK (172 aa)) folds into the GST C-terminal domain.

The protein belongs to the chloride channel CLIC family. Monomer (soluble state). Interacts with dopamine receptors DRD2, DRD3 and DRD4. In terms of processing, phosphorylated. In terms of tissue distribution, predominantly expressed in brain, pituitary and stomach. In adult brain, it is restricted to the choroid plexus, the striatal proliferative subventricular zone and the cerebellum where it colocalizes with the D(3)R in the Purkinje cells of the lobules IX and X.

The protein resides in the cytoplasm. The protein localises to the cell membrane. It catalyses the reaction chloride(in) = chloride(out). Channel activity is redox- and pH-regulated. Inhibited by IAA-94. In the soluble state, catalyzes glutaredoxin-like thiol disulfide exchange reactions with reduced glutathione as electron donor. Can insert into membranes and form voltage-dependent chloride-selective channels. The channel opens upon membrane depolarization at positive voltages and closes at negative membrane voltages. May play a critical role in water-secreting cells, possibly through the regulation of chloride ion transport. In Rattus norvegicus (Rat), this protein is Chloride intracellular channel protein 6 (Clic6).